Consider the following 246-residue polypeptide: UDP-N-acetyl-D-mannosaminuronic acid transferase (246 aa).

This sequence belongs to the glycosyltransferase 26 family.

It carries out the reaction UDP-N-acetyl-alpha-D-mannosaminouronate + N-acetyl-alpha-D-glucosaminyl-di-trans,octa-cis-undecaprenyl diphosphate = beta-D-ManNAcA-(1-&gt;4)-alpha-D-GlcNAc-di-trans,octa-cis-undecaprenyl diphosphate + UDP + H(+). The protein operates within bacterial outer membrane biogenesis; enterobacterial common antigen biosynthesis. Catalyzes the synthesis of Und-PP-GlcNAc-ManNAcA (Lipid II), the second lipid-linked intermediate involved in enterobacterial common antigen (ECA) synthesis. This chain is UDP-N-acetyl-D-mannosaminuronic acid transferase, found in Citrobacter koseri (strain ATCC BAA-895 / CDC 4225-83 / SGSC4696).